The primary structure comprises 104 residues: UPF0213 protein ORF82 (104 aa).

Residues 7–83 (KVWCVYIVRR…KRKRGKYFKL (77 aa)) enclose the GIY-YIG domain.

It belongs to the UPF0213 family.

The protein is UPF0213 protein ORF82 of Orgyia pseudotsugata (Douglas-fir tussock moth).